A 299-amino-acid chain; its full sequence is Glycine--tRNA ligase alpha subunit (299 aa).

Belongs to the class-II aminoacyl-tRNA synthetase family. As to quaternary structure, tetramer of two alpha and two beta subunits.

The protein localises to the cytoplasm. The catalysed reaction is tRNA(Gly) + glycine + ATP = glycyl-tRNA(Gly) + AMP + diphosphate. In Desulforapulum autotrophicum (strain ATCC 43914 / DSM 3382 / VKM B-1955 / HRM2) (Desulfobacterium autotrophicum), this protein is Glycine--tRNA ligase alpha subunit.